We begin with the raw amino-acid sequence, 288 residues long: 4-hydroxy-3-methylbut-2-enyl diphosphate reductase (288 aa).

C13 contacts [4Fe-4S] cluster. (2E)-4-hydroxy-3-methylbut-2-enyl diphosphate is bound by residues H41 and H75. Dimethylallyl diphosphate contacts are provided by H41 and H75. H41 and H75 together coordinate isopentenyl diphosphate. Residue C97 participates in [4Fe-4S] cluster binding. (2E)-4-hydroxy-3-methylbut-2-enyl diphosphate is bound at residue H130. H130 contributes to the dimethylallyl diphosphate binding site. Isopentenyl diphosphate is bound at residue H130. E132 serves as the catalytic Proton donor. A (2E)-4-hydroxy-3-methylbut-2-enyl diphosphate-binding site is contributed by T168. C199 contacts [4Fe-4S] cluster. 4 residues coordinate (2E)-4-hydroxy-3-methylbut-2-enyl diphosphate: S227, S228, N229, and S271. 4 residues coordinate dimethylallyl diphosphate: S227, S228, N229, and S271. S227, S228, N229, and S271 together coordinate isopentenyl diphosphate.

This sequence belongs to the IspH family. [4Fe-4S] cluster is required as a cofactor.

It carries out the reaction isopentenyl diphosphate + 2 oxidized [2Fe-2S]-[ferredoxin] + H2O = (2E)-4-hydroxy-3-methylbut-2-enyl diphosphate + 2 reduced [2Fe-2S]-[ferredoxin] + 2 H(+). The catalysed reaction is dimethylallyl diphosphate + 2 oxidized [2Fe-2S]-[ferredoxin] + H2O = (2E)-4-hydroxy-3-methylbut-2-enyl diphosphate + 2 reduced [2Fe-2S]-[ferredoxin] + 2 H(+). It participates in isoprenoid biosynthesis; dimethylallyl diphosphate biosynthesis; dimethylallyl diphosphate from (2E)-4-hydroxy-3-methylbutenyl diphosphate: step 1/1. The protein operates within isoprenoid biosynthesis; isopentenyl diphosphate biosynthesis via DXP pathway; isopentenyl diphosphate from 1-deoxy-D-xylulose 5-phosphate: step 6/6. Functionally, catalyzes the conversion of 1-hydroxy-2-methyl-2-(E)-butenyl 4-diphosphate (HMBPP) into a mixture of isopentenyl diphosphate (IPP) and dimethylallyl diphosphate (DMAPP). Acts in the terminal step of the DOXP/MEP pathway for isoprenoid precursor biosynthesis. This Phocaeicola vulgatus (strain ATCC 8482 / DSM 1447 / JCM 5826 / CCUG 4940 / NBRC 14291 / NCTC 11154) (Bacteroides vulgatus) protein is 4-hydroxy-3-methylbut-2-enyl diphosphate reductase.